The sequence spans 453 residues: Putative ABC transporter ATP-binding protein MM_0462 (453 aa).

An ABC transporter domain is found at 4-239 (LETRSLKYSY…QELLKKVGLR (236 aa)). 37-44 (GQNGSGKS) serves as a coordination point for ATP.

This sequence belongs to the ABC transporter superfamily.

Its subcellular location is the cell membrane. Functionally, probably part of an ABC transporter complex. Responsible for energy coupling to the transport system. The sequence is that of Putative ABC transporter ATP-binding protein MM_0462 from Methanosarcina mazei (strain ATCC BAA-159 / DSM 3647 / Goe1 / Go1 / JCM 11833 / OCM 88) (Methanosarcina frisia).